The primary structure comprises 248 residues: DNA/RNA-binding protein ALBA1 (248 aa).

The tract at residues 217-248 is disordered; the sequence is GRDGGYRGGNRGGSRSGFRGGRGGFRGGRALS. Gly residues predominate over residues 222–248; the sequence is YRGGNRGGSRSGFRGGRGGFRGGRALS.

The protein belongs to the histone-like Alba family. In terms of assembly, may form homodimers. Identified in a TARE6-associated complex consisting of over 30 proteins and including ALBA1, ALBA2 and ALBA4; the complex binds to the non-coding subtelomeric repeat region TARE6.

It localises to the nucleus. The protein localises to the chromosome. Its subcellular location is the telomere. It is found in the cytoplasm. Its function is as follows. Possesses DNA- and RNA-binding activities. During the asexual blood stages binds to a sub-population of mature mRNAs and regulates the timing of their translation. Binds to DNA with relaxed sequence specificity. Associates with the subtelomeric TARE6 repeats. This Plasmodium falciparum (isolate 3D7) protein is DNA/RNA-binding protein ALBA1.